Consider the following 236-residue polypeptide: uncharacterized protein (236 aa).

A GP-PDE domain is found at 4 to 236 (QFLIAYRGYS…VKFQITAQIY (233 aa)).

This sequence to glycerophosphoryl diester phosphodiesterases (EC 3.1.4.46). To M.genitalium MG293.

This is an uncharacterized protein from Mycoplasma genitalium (strain ATCC 33530 / DSM 19775 / NCTC 10195 / G37) (Mycoplasmoides genitalium).